We begin with the raw amino-acid sequence, 577 residues long: Arginine--tRNA ligase (577 aa).

The 'HIGH' region signature appears at 122–132 (PNVAKEMHVGH).

This sequence belongs to the class-I aminoacyl-tRNA synthetase family. As to quaternary structure, monomer.

It is found in the cytoplasm. It carries out the reaction tRNA(Arg) + L-arginine + ATP = L-arginyl-tRNA(Arg) + AMP + diphosphate. This Haemophilus influenzae (strain PittGG) protein is Arginine--tRNA ligase.